Consider the following 475-residue polypeptide: tRNA (guanine(37)-N(1))-methyltransferase (475 aa).

Residues His219, 258 to 259 (DL), and 286 to 287 (DG) each bind S-adenosyl-L-methionine. A disordered region spans residues 306–328 (KITKQKPTSNDKKRNRKVESPTV). Asn349 provides a ligand contact to S-adenosyl-L-methionine. The span at 456-469 (NLVSQSDVSKSSDN) shows a compositional bias: polar residues. Positions 456–475 (NLVSQSDVSKSSDNILEKDT) are disordered.

It belongs to the class I-like SAM-binding methyltransferase superfamily. TRM5/TYW2 family. In terms of assembly, monomer.

The protein resides in the mitochondrion matrix. The protein localises to the nucleus. Its subcellular location is the cytoplasm. It catalyses the reaction guanosine(37) in tRNA + S-adenosyl-L-methionine = N(1)-methylguanosine(37) in tRNA + S-adenosyl-L-homocysteine + H(+). In terms of biological role, specifically methylates the N1 position of guanosine-37 in various cytoplasmic and mitochondrial tRNAs. Methylation is not dependent on the nature of the nucleoside 5' of the target nucleoside. This is the first step in the biosynthesis of wybutosine (yW), a modified base adjacent to the anticodon of tRNAs and required for accurate decoding. This is tRNA (guanine(37)-N(1))-methyltransferase from Batrachochytrium dendrobatidis (strain JAM81 / FGSC 10211) (Frog chytrid fungus).